Reading from the N-terminus, the 367-residue chain is tRNA-specific 2-thiouridylase MnmA (367 aa).

ATP contacts are provided by residues 12-19 and M38; that span reads GMSGGVDS. The interaction with target base in tRNA stretch occupies residues 98-100; that stretch reads NPD. C103 functions as the Nucleophile in the catalytic mechanism. Residues C103 and C200 are joined by a disulfide bond. G128 contributes to the ATP binding site. The tract at residues 150–152 is interaction with tRNA; sequence KDQ. The Cysteine persulfide intermediate role is filled by C200. The interaction with tRNA stretch occupies residues 312-313; sequence RY.

This sequence belongs to the MnmA/TRMU family. In terms of assembly, interacts with TusE.

The protein localises to the cytoplasm. The catalysed reaction is S-sulfanyl-L-cysteinyl-[protein] + uridine(34) in tRNA + AH2 + ATP = 2-thiouridine(34) in tRNA + L-cysteinyl-[protein] + A + AMP + diphosphate + H(+). Its function is as follows. Catalyzes the 2-thiolation of uridine at the wobble position (U34) of tRNA(Lys), tRNA(Glu) and tRNA(Gln), leading to the formation of s(2)U34, the first step of tRNA-mnm(5)s(2)U34 synthesis. Sulfur is provided by IscS, via a sulfur-relay system. Binds ATP and its substrate tRNAs. The sequence is that of tRNA-specific 2-thiouridylase MnmA from Proteus mirabilis (strain HI4320).